A 499-amino-acid polypeptide reads, in one-letter code: Aspartyl/glutamyl-tRNA(Asn/Gln) amidotransferase subunit B (499 aa).

This sequence belongs to the GatB/GatE family. GatB subfamily. As to quaternary structure, heterotrimer of A, B and C subunits.

It catalyses the reaction L-glutamyl-tRNA(Gln) + L-glutamine + ATP + H2O = L-glutaminyl-tRNA(Gln) + L-glutamate + ADP + phosphate + H(+). It carries out the reaction L-aspartyl-tRNA(Asn) + L-glutamine + ATP + H2O = L-asparaginyl-tRNA(Asn) + L-glutamate + ADP + phosphate + 2 H(+). Its function is as follows. Allows the formation of correctly charged Asn-tRNA(Asn) or Gln-tRNA(Gln) through the transamidation of misacylated Asp-tRNA(Asn) or Glu-tRNA(Gln) in organisms which lack either or both of asparaginyl-tRNA or glutaminyl-tRNA synthetases. The reaction takes place in the presence of glutamine and ATP through an activated phospho-Asp-tRNA(Asn) or phospho-Glu-tRNA(Gln). This chain is Aspartyl/glutamyl-tRNA(Asn/Gln) amidotransferase subunit B, found in Bifidobacterium longum (strain DJO10A).